Here is a 148-residue protein sequence, read N- to C-terminus: FAD synthase (148 aa).

ATP contacts are provided by residues 9-10 (TF), 14-17 (HPGH), asparagine 92, and tyrosine 119.

It belongs to the archaeal FAD synthase family. As to quaternary structure, homodimer. Requires a divalent metal cation as cofactor.

The enzyme catalyses FMN + ATP + H(+) = FAD + diphosphate. It participates in cofactor biosynthesis; FAD biosynthesis; FAD from FMN: step 1/1. Catalyzes the transfer of the AMP portion of ATP to flavin mononucleotide (FMN) to produce flavin adenine dinucleotide (FAD) coenzyme. The protein is FAD synthase of Methanolacinia petrolearia (strain DSM 11571 / OCM 486 / SEBR 4847) (Methanoplanus petrolearius).